The sequence spans 68 residues: ATP synthase subunit c (68 aa).

The next 2 helical transmembrane spans lie at Ala-5–Val-25 and Phe-47–Val-67.

This sequence belongs to the ATPase C chain family. F-type ATPases have 2 components, F(1) - the catalytic core - and F(0) - the membrane proton channel. F(1) has five subunits: alpha(3), beta(3), gamma(1), delta(1), epsilon(1). F(0) has three main subunits: a(1), b(2) and c(10-14). The alpha and beta chains form an alternating ring which encloses part of the gamma chain. F(1) is attached to F(0) by a central stalk formed by the gamma and epsilon chains, while a peripheral stalk is formed by the delta and b chains.

It localises to the cell membrane. In terms of biological role, f(1)F(0) ATP synthase produces ATP from ADP in the presence of a proton or sodium gradient. F-type ATPases consist of two structural domains, F(1) containing the extramembraneous catalytic core and F(0) containing the membrane proton channel, linked together by a central stalk and a peripheral stalk. During catalysis, ATP synthesis in the catalytic domain of F(1) is coupled via a rotary mechanism of the central stalk subunits to proton translocation. Its function is as follows. Key component of the F(0) channel; it plays a direct role in translocation across the membrane. A homomeric c-ring of between 10-14 subunits forms the central stalk rotor element with the F(1) delta and epsilon subunits. The chain is ATP synthase subunit c from Oceanobacillus iheyensis (strain DSM 14371 / CIP 107618 / JCM 11309 / KCTC 3954 / HTE831).